The chain runs to 232 residues: Orotidine 5'-phosphate decarboxylase (232 aa).

Residues Asp-13, Lys-35, 62 to 71 (DLKFHDIPNT), Thr-122, Arg-182, Gln-191, Gly-211, and Arg-212 contribute to the substrate site. Lys-64 functions as the Proton donor in the catalytic mechanism.

This sequence belongs to the OMP decarboxylase family. Type 1 subfamily. Homodimer.

It catalyses the reaction orotidine 5'-phosphate + H(+) = UMP + CO2. It participates in pyrimidine metabolism; UMP biosynthesis via de novo pathway; UMP from orotate: step 2/2. Functionally, catalyzes the decarboxylation of orotidine 5'-monophosphate (OMP) to uridine 5'-monophosphate (UMP). In Pseudomonas fluorescens (strain SBW25), this protein is Orotidine 5'-phosphate decarboxylase.